Reading from the N-terminus, the 237-residue chain is tRNA-splicing endonuclease subunit Sen2-1 (237 aa).

Active-site residues include tyrosine 148, histidine 156, and lysine 190.

It belongs to the tRNA-intron endonuclease family. TRNA splicing endonuclease is a heterotetramer composed of SEN2, SEN15, SEN34/LENG5 and SEN54.

It is found in the nucleus. It carries out the reaction pretRNA = a 3'-half-tRNA molecule with a 5'-OH end + a 5'-half-tRNA molecule with a 2',3'-cyclic phosphate end + an intron with a 2',3'-cyclic phosphate and a 5'-hydroxyl terminus.. Its function is as follows. Constitutes one of the two catalytic subunit of the tRNA-splicing endonuclease complex, a complex responsible for identification and cleavage of the splice sites in pre-tRNA. It cleaves pre-tRNA at the 5'- and 3'-splice sites to release the intron. The products are an intron and two tRNA half-molecules bearing 2',3'-cyclic phosphate and 5'-OH termini. There are no conserved sequences at the splice sites, but the intron is invariably located at the same site in the gene, placing the splice sites an invariant distance from the constant structural features of the tRNA body. Probably carries the active site for 5'-splice site cleavage. The polypeptide is tRNA-splicing endonuclease subunit Sen2-1 (SEN1) (Arabidopsis thaliana (Mouse-ear cress)).